The sequence spans 101 residues: MVVASAPAKPGSVGQQESASRDATASPWVTIVWDDPVNLMTYVTYVFQKLFGYSEPHATKLMLQVHNEGRAVVSAGSREAMEVDVSKLHAAGLWATMQQDR.

A disordered region spans residues 1–24 (MVVASAPAKPGSVGQQESASRDAT). A compositionally biased stretch (polar residues) spans 13–23 (VGQQESASRDA).

The protein belongs to the ClpS family. Binds to the N-terminal domain of the chaperone ClpA.

Its function is as follows. Involved in the modulation of the specificity of the ClpAP-mediated ATP-dependent protein degradation. The chain is ATP-dependent Clp protease adapter protein ClpS from Mycobacterium marinum (strain ATCC BAA-535 / M).